The chain runs to 372 residues: Oxysterol-binding protein 3 (372 aa).

The segment covering 1 to 10 has biased composition (basic and acidic residues); the sequence is MGKSDRKLTE. Positions 1–25 are disordered; sequence MGKSDRKLTEENSIENGVKPGKLTE.

The protein belongs to the OSBP family.

The polypeptide is Oxysterol-binding protein 3 (osbC) (Dictyostelium discoideum (Social amoeba)).